Reading from the N-terminus, the 388-residue chain is Succinate--CoA ligase [ADP-forming] subunit beta (388 aa).

One can recognise an ATP-grasp domain in the interval lysine 9–histidine 244. ATP is bound by residues lysine 46, glycine 53–glycine 55, glutamate 99, threonine 102, and glutamate 107. 2 residues coordinate Mg(2+): asparagine 199 and aspartate 213. Residues asparagine 264 and glycine 321–valine 323 contribute to the substrate site.

Belongs to the succinate/malate CoA ligase beta subunit family. In terms of assembly, heterotetramer of two alpha and two beta subunits. Requires Mg(2+) as cofactor.

The catalysed reaction is succinate + ATP + CoA = succinyl-CoA + ADP + phosphate. The enzyme catalyses GTP + succinate + CoA = succinyl-CoA + GDP + phosphate. It functions in the pathway carbohydrate metabolism; tricarboxylic acid cycle; succinate from succinyl-CoA (ligase route): step 1/1. In terms of biological role, succinyl-CoA synthetase functions in the citric acid cycle (TCA), coupling the hydrolysis of succinyl-CoA to the synthesis of either ATP or GTP and thus represents the only step of substrate-level phosphorylation in the TCA. The beta subunit provides nucleotide specificity of the enzyme and binds the substrate succinate, while the binding sites for coenzyme A and phosphate are found in the alpha subunit. The sequence is that of Succinate--CoA ligase [ADP-forming] subunit beta from Shewanella denitrificans (strain OS217 / ATCC BAA-1090 / DSM 15013).